The primary structure comprises 150 residues: Protein ADM2 (150 aa).

Positions 1 to 25 (MAQLLMVTVTLGCISLLYLLPGTLS) are cleaved as a signal peptide. The propeptide occupies 26–100 (GSLGKGLRHS…HPGPQRPTGS (75 aa)). The tract at residues 28 to 102 (LGKGLRHSRP…GPQRPTGSRR (75 aa)) is disordered. A disulfide bond links C112 and C117. Y149 carries the post-translational modification Tyrosine amide.

It belongs to the adrenomedullin family. As to expression, high expression detected in the submaxillary gland, kidney, stomach, and mesentery, followed by the pituitary, lung, pancreas, intestines, spleen, thymus and ovary. Expressed mainly in the intermediate lobe of the pituitary, with sporadic in the anterior lobe.

Its subcellular location is the secreted. Intermedin/ADM2 is a peptide hormone that plays a role as physiological regulator of gastrointestinal and cardiovascular bioactivities mediated by the CALCRL-RAMPs receptor complexes. Activates the cAMP-dependent pathway through interaction with CALCRL-RAMP3 receptor complex. The protein is Protein ADM2 of Mus musculus (Mouse).